The chain runs to 155 residues: Interleukin-2 (155 aa).

An N-terminal signal peptide occupies residues 1-20 (MYKMQLVACIALSLVLITNS). Residue T23 is glycosylated (O-linked (GalNAc...) threonine). The cysteines at positions 77 and 125 are disulfide-linked.

This sequence belongs to the IL-2 family.

It is found in the secreted. Its function is as follows. Cytokine produced by activated CD4-positive helper T-cells and to a lesser extend activated CD8-positive T-cells and natural killer (NK) cells that plays pivotal roles in the immune response and tolerance. Binds to a receptor complex composed of either the high-affinity trimeric IL-2R (IL2RA/CD25, IL2RB/CD122 and IL2RG/CD132) or the low-affinity dimeric IL-2R (IL2RB and IL2RG). Interaction with the receptor leads to oligomerization and conformation changes in the IL-2R subunits resulting in downstream signaling starting with phosphorylation of JAK1 and JAK3. In turn, JAK1 and JAK3 phosphorylate the receptor to form a docking site leading to the phosphorylation of several substrates including STAT5. This process leads to activation of several pathways including STAT, phosphoinositide-3-kinase/PI3K and mitogen-activated protein kinase/MAPK pathways. Functions as a T-cell growth factor and can increase NK-cell cytolytic activity as well. Promotes strong proliferation of activated B-cells and subsequently immunoglobulin production. Plays a pivotal role in regulating the adaptive immune system by controlling the survival and proliferation of regulatory T-cells, which are required for the maintenance of immune tolerance. Moreover, participates in the differentiation and homeostasis of effector T-cell subsets, including Th1, Th2, Th17 as well as memory CD8-positive T-cells. In Dasypus novemcinctus (Nine-banded armadillo), this protein is Interleukin-2 (IL2).